A 732-amino-acid chain; its full sequence is MDAKTDDKDGGKCPFPHGGGRGRRNSDWWPEHLDISLLHRNSTLSDPMGKGFDYAREFESLDLDAVIKDLHALMTDSQDWWPADFGHYGGLMVRMAWHSAGTYRTTDGRGGAGAGQQRFAPLNSWPDNANLDKARRLLWPIKQKYGNKISWADLYVLTGNVALESMGFKTFGFAGGRADTWEPEELFWGPEGSWLGDERYSGERELSDPLGAVQMGLIYVNPEGPNGNPDPVAAAKDIRETFARMAMNDEETVALIAGGHTFGKTHGAGDPSLIGAEPEGGALEDQGLGWKSSFGTGFGADAITGGPEVIWTQTPTQWSNHFFENLFGFEWELDKSPAGAKQWKAKGAEANIPDPFDPTKKRLPTMLTTDLSLRFDPAYEKISRRFLENPDQFADAFARAWFKLTHRDMGPKVRYRGKLVPKEDLIWQDPIPPVDHELVGDKDIAALKAKILGSGLSVSQLVSAAFASASTYRHSDKRGGANGARIRFAPQKDWEVNQPSDLAQVLSKLEAIQKEFNGAQTDGKKVSLADLIVLGGCAAVEKAAKDAGTDIQVPFTPGRMDALEEQTDADSFKVLEPRADGFRNFIGKRKQYMSPEESLVDRAQLLNLTAPEMTALLGGLRVLGGNVGHTTHGVFTERPEKLTNDFFVNLLDMKTAWSPSATTEVVYEGRDRKTGELRWTGTRVDLIFGSHSQLRALAEVYAQSDAQPKFARDFVAAWTKVMNADRFDIVAK.

Basic and acidic residues predominate over residues 1–11 (MDAKTDDKDGG). The interval 1–24 (MDAKTDDKDGGKCPFPHGGGRGRR) is disordered. A cross-link (tryptophyl-tyrosyl-methioninium (Trp-Tyr) (with M-245)) is located at residues 97–219 (WHSAGTYRTT…LGAVQMGLIY (123 aa)). The active-site Proton acceptor is the His98. Positions 219–245 (YVNPEGPNGNPDPVAAAKDIRETFARM) form a cross-link, tryptophyl-tyrosyl-methioninium (Tyr-Met) (with W-97). A heme b-binding site is contributed by His260.

It belongs to the peroxidase family. Peroxidase/catalase subfamily. Homodimer or homotetramer. Heme b serves as cofactor. Formation of the three residue Trp-Tyr-Met cross-link is important for the catalase, but not the peroxidase activity of the enzyme.

The enzyme catalyses H2O2 + AH2 = A + 2 H2O. It catalyses the reaction 2 H2O2 = O2 + 2 H2O. In terms of biological role, bifunctional enzyme with both catalase and broad-spectrum peroxidase activity. This is Catalase-peroxidase from Rhodopseudomonas palustris (strain HaA2).